A 679-amino-acid polypeptide reads, in one-letter code: Transketolase 10 (679 aa).

H40 provides a ligand contact to substrate. Thiamine diphosphate contacts are provided by residues H80 and 129–131 (GPL). D170 contacts Mg(2+). 2 residues coordinate thiamine diphosphate: G171 and N200. Residues N200 and I202 each contribute to the Mg(2+) site. Substrate is bound by residues H277, R371, and S398. A thiamine diphosphate-binding site is contributed by H277. Thiamine diphosphate is bound by residues E425 and F452. E425 (proton donor) is an active-site residue. Residues H476, D484, and R535 each coordinate substrate.

The protein belongs to the transketolase family. In terms of assembly, homodimer. Mg(2+) serves as cofactor. It depends on Ca(2+) as a cofactor. Mn(2+) is required as a cofactor. The cofactor is Co(2+). Requires thiamine diphosphate as cofactor. In terms of tissue distribution, leaves.

The enzyme catalyses D-sedoheptulose 7-phosphate + D-glyceraldehyde 3-phosphate = aldehydo-D-ribose 5-phosphate + D-xylulose 5-phosphate. In terms of biological role, could be involved in the conversion of sugars, which are a major phenomenon in the rehydration process. Functionally, catalyzes the transfer of a two-carbon ketol group from a ketose donor to an aldose acceptor, via a covalent intermediate with the cofactor thiamine pyrophosphate. This chain is Transketolase 10 (TKT10), found in Craterostigma plantagineum (Blue gem).